The sequence spans 370 residues: Cytoplasmic envelopment protein 2 (370 aa).

It belongs to the herpesviridae cytoplasmic envelopment protein 2 family. Interacts with cytoplasmic envelopment protein 3 and with the capsid.

Its subcellular location is the virion tegument. The protein localises to the host cytoplasm. The protein resides in the host nucleus. In terms of biological role, plays a critical role in cytoplasmic virus egress. Participates in the final step of tegumentation and envelope acquisition within the host cytoplasm by directly interacting with the capsid. Upon virion binding to target cell, a signaling cascade is triggered to disrupt the interaction with the capsid, thereby preparing capsid uncoating. In Equine herpesvirus 1 (strain V592) (EHV-1), this protein is Cytoplasmic envelopment protein 2.